A 154-amino-acid polypeptide reads, in one-letter code: Myoglobin (154 aa).

The 147-residue stretch at glycine 2 to lysine 148 folds into the Globin domain. Phosphoserine is present on serine 4. Residue histidine 65 coordinates nitrite. Residue histidine 65 coordinates O2. Histidine 94 serves as a coordination point for heme b.

This sequence belongs to the globin family. Monomeric.

The protein localises to the cytoplasm. The protein resides in the sarcoplasm. The enzyme catalyses Fe(III)-heme b-[protein] + nitric oxide + H2O = Fe(II)-heme b-[protein] + nitrite + 2 H(+). The catalysed reaction is H2O2 + AH2 = A + 2 H2O. Monomeric heme protein which primary function is to store oxygen and facilitate its diffusion within muscle tissues. Reversibly binds oxygen through a pentacoordinated heme iron and enables its timely and efficient release as needed during periods of heightened demand. Depending on the oxidative conditions of tissues and cells, and in addition to its ability to bind oxygen, it also has a nitrite reductase activity whereby it regulates the production of bioactive nitric oxide. Under stress conditions, like hypoxia and anoxia, it also protects cells against reactive oxygen species thanks to its pseudoperoxidase activity. This is Myoglobin (MB) from Equus quagga burchellii (Burchell's zebra).